The chain runs to 1088 residues: Platelet-derived growth factor receptor alpha (1088 aa).

The N-terminal stretch at 1-23 (MGTSQAFLVLSCLLTGPSLIVCQ) is a signal peptide. 5 consecutive Ig-like C2-type domains span residues 24–112 (LLLP…SEIE), 116–200 (IYIY…FKTS), 201–305 (EFNV…KTVT), 318–409 (PTFG…FELS), and 413–516 (PASI…LKLV). The Extracellular segment spans residues 24 to 527 (LLLPSILPNE…PSLRSELTVA (504 aa)). C48 and C99 form a disulfide bridge. N75, N102, and N178 each carry an N-linked (GlcNAc...) asparagine glycan. Intrachain disulfides connect C149-C188 and C234-C289. N-linked (GlcNAc...) asparagine glycosylation is found at N352, N358, N457, and N467. C434 and C500 are oxidised to a cystine. A helical membrane pass occupies residues 528-548 (AAVLVLLVIVIVSLIVLVVIW). Residues 549 to 1088 (KQKPRYEIRW…SSDLVEDSFL (540 aa)) lie on the Cytoplasmic side of the membrane. Y571 and Y573 each carry phosphotyrosine; by autocatalysis. The Protein kinase domain maps to 592–953 (LVLGRILGSG…HLSEIVENLL (362 aa)). Residues 598 to 606 (LGSGAFGKV) and K626 contribute to the ATP site. A phosphotyrosine; by autocatalysis mark is found at Y719, Y730, Y741, Y753, Y761, and Y767. D817 acts as the Proton acceptor in catalysis. Residues Y848, Y987, and Y1017 each carry the phosphotyrosine; by autocatalysis modification. The interval 1017–1088 (YIIPLPDIDP…SSDLVEDSFL (72 aa)) is disordered. A compositionally biased stretch (polar residues) spans 1040 to 1058 (SSQTSEESAIETGSSSSTF). Residues 1064-1088 (ETIEDIDMMDDIGIDSSDLVEDSFL) are compositionally biased toward acidic residues.

This sequence belongs to the protein kinase superfamily. Tyr protein kinase family. CSF-1/PDGF receptor subfamily. In terms of assembly, interacts with homodimeric PDGFA, PDGFB and PDGFC, and with heterodimers formed by PDGFA and PDGFB. Monomer in the absence of bound ligand. Interaction with dimeric PDGFA, PDGFB and/or PDGFC leads to receptor dimerization, where both PDGFRA homodimers and heterodimers with PDGFRB are observed. Interacts (tyrosine phosphorylated) with SHB (via SH2 domain). Interacts (tyrosine phosphorylated) with SHF (via SH2 domain). Interacts (tyrosine phosphorylated) with SRC (via SH2 domain). Interacts (tyrosine phosphorylated) with PIK3R1. Interacts (tyrosine phosphorylated) with PLCG1 (via SH2 domain). Interacts (tyrosine phosphorylated) with CRK, GRB2 and GRB7. Interacts with CD248; this interaction promotes PDGF receptor signaling pathway. Post-translationally, ubiquitinated, leading to its internalization and degradation. Autophosphorylated on tyrosine residues upon ligand binding. Autophosphorylation occurs in trans, i.e. one subunit of the dimeric receptor phosphorylates tyrosine residues on the other subunit. Phosphorylation at Tyr-730 and Tyr-741 is important for interaction with PIK3R1. Phosphorylation at Tyr-719 and Tyr-753 is important for interaction with PTPN11. Phosphorylation at Tyr-761 is important for interaction with CRK. Phosphorylation at Tyr-571 and Tyr-573 is important for interaction with SRC and SRC family members. Phosphorylation at Tyr-987 and Tyr-1017 is important for interaction with PLCG1.

It localises to the cell membrane. The protein resides in the cell projection. Its subcellular location is the cilium. It is found in the golgi apparatus. It catalyses the reaction L-tyrosyl-[protein] + ATP = O-phospho-L-tyrosyl-[protein] + ADP + H(+). Its activity is regulated as follows. Present in an inactive conformation in the absence of bound ligand. Binding of PDGFA and/or PDGFB leads to dimerization and activation by autophosphorylation on tyrosine residues. Inhibited by imatinib, nilotinib and sorafenib. In terms of biological role, tyrosine-protein kinase that acts as a cell-surface receptor for PDGFA, PDGFB and PDGFC and plays an essential role in the regulation of embryonic development, cell proliferation, survival and chemotaxis. Depending on the context, promotes or inhibits cell proliferation and cell migration. Plays an important role in the differentiation of bone marrow-derived mesenchymal stem cells. Required for normal skeleton development and cephalic closure during embryonic development. Required for normal development of the mucosa lining the gastrointestinal tract, and for recruitment of mesenchymal cells and normal development of intestinal villi. Plays a role in cell migration and chemotaxis in wound healing. Plays a role in platelet activation, secretion of agonists from platelet granules, and in thrombin-induced platelet aggregation. Binding of its cognate ligands - homodimeric PDGFA, homodimeric PDGFB, heterodimers formed by PDGFA and PDGFB or homodimeric PDGFC -leads to the activation of several signaling cascades; the response depends on the nature of the bound ligand and is modulated by the formation of heterodimers between PDGFRA and PDGFRB. Phosphorylates PIK3R1, PLCG1, and PTPN11. Activation of PLCG1 leads to the production of the cellular signaling molecules diacylglycerol and inositol 1,4,5-trisphosphate, mobilization of cytosolic Ca(2+) and the activation of protein kinase C. Phosphorylates PIK3R1, the regulatory subunit of phosphatidylinositol 3-kinase, and thereby mediates activation of the AKT1 signaling pathway. Mediates activation of HRAS and of the MAP kinases MAPK1/ERK2 and/or MAPK3/ERK1. Promotes activation of STAT family members STAT1, STAT3 and STAT5A and/or STAT5B. Receptor signaling is down-regulated by protein phosphatases that dephosphorylate the receptor and its down-stream effectors, and by rapid internalization of the activated receptor. The protein is Platelet-derived growth factor receptor alpha (Pdgfra) of Rattus norvegicus (Rat).